The sequence spans 119 residues: Small ribosomal subunit protein bS6 (119 aa).

The tract at residues 99 to 119 (KKEKKQSRKEEGSENSEKVEE) is disordered.

Belongs to the bacterial ribosomal protein bS6 family.

Functionally, binds together with bS18 to 16S ribosomal RNA. The chain is Small ribosomal subunit protein bS6 from Thermosipho melanesiensis (strain DSM 12029 / CIP 104789 / BI429).